An 88-amino-acid chain; its full sequence is Small ribosomal subunit protein uS15 (88 aa).

It belongs to the universal ribosomal protein uS15 family. In terms of assembly, part of the 30S ribosomal subunit. Forms a bridge to the 50S subunit in the 70S ribosome, contacting the 23S rRNA.

One of the primary rRNA binding proteins, it binds directly to 16S rRNA where it helps nucleate assembly of the platform of the 30S subunit by binding and bridging several RNA helices of the 16S rRNA. In terms of biological role, forms an intersubunit bridge (bridge B4) with the 23S rRNA of the 50S subunit in the ribosome. The protein is Small ribosomal subunit protein uS15 of Verminephrobacter eiseniae (strain EF01-2).